Here is a 303-residue protein sequence, read N- to C-terminus: Cytosolic Fe-S cluster assembly factor CFD1 (303 aa).

15-22 (GKGGVGKS) is an ATP binding site. The [4Fe-4S] cluster site is built by C199 and C202.

This sequence belongs to the Mrp/NBP35 ATP-binding proteins family. NUBP2/CFD1 subfamily. As to quaternary structure, heterotetramer of 2 NBP35 and 2 CFD1 chains. Requires [4Fe-4S] cluster as cofactor.

It localises to the cytoplasm. In terms of biological role, component of the cytosolic iron-sulfur (Fe/S) protein assembly (CIA) machinery. Required for maturation of extramitochondrial Fe-S proteins. The NBP35-CFD1 heterotetramer forms a Fe-S scaffold complex, mediating the de novo assembly of an Fe-S cluster and its transfer to target apoproteins. This chain is Cytosolic Fe-S cluster assembly factor CFD1, found in Chaetomium globosum (strain ATCC 6205 / CBS 148.51 / DSM 1962 / NBRC 6347 / NRRL 1970) (Soil fungus).